Here is a 501-residue protein sequence, read N- to C-terminus: NAD(P)H-quinone oxidoreductase chain 4, chloroplastic (501 aa).

14 helical membrane passes run 5–25 (FPWL…IFFL), 38–58 (ICIC…HFQL), 85–105 (GLSI…TLAA), 112–130 (SRLF…IGSF), 135–155 (LLLF…LLAM), 168–188 (FILY…GIGL), 209–229 (ALEI…LPII), 243–263 (HYST…YGLV), 275–295 (SIFS…AALT), 306–326 (IAYS…SITD), 331–351 (GAIL…FLAG), 387–407 (LALP…GIIT), 417–437 (ILIT…LLSM), and 463–483 (LFVS…PDFV).

The protein belongs to the complex I subunit 4 family.

It localises to the plastid. It is found in the chloroplast thylakoid membrane. It catalyses the reaction a plastoquinone + NADH + (n+1) H(+)(in) = a plastoquinol + NAD(+) + n H(+)(out). It carries out the reaction a plastoquinone + NADPH + (n+1) H(+)(in) = a plastoquinol + NADP(+) + n H(+)(out). The protein is NAD(P)H-quinone oxidoreductase chain 4, chloroplastic of Eucalyptus globulus subsp. globulus (Tasmanian blue gum).